The chain runs to 359 residues: Peptide chain release factor 1 (359 aa).

Gln-235 is subject to N5-methylglutamine. The disordered stretch occupies residues 287 to 312; it reads AQEASAMRSAQVGSGDRSERIRTYNF.

The protein belongs to the prokaryotic/mitochondrial release factor family. In terms of processing, methylated by PrmC. Methylation increases the termination efficiency of RF1.

The protein resides in the cytoplasm. Its function is as follows. Peptide chain release factor 1 directs the termination of translation in response to the peptide chain termination codons UAG and UAA. This Chlamydia trachomatis serovar A (strain ATCC VR-571B / DSM 19440 / HAR-13) protein is Peptide chain release factor 1.